Reading from the N-terminus, the 643-residue chain is MAKPCLFSFSLCLLLLSSLCLAERPERYKECQLDRLNALEPDNRVESEGGVTETWNSNRPELRCAGVAFEKHTIQPQGLHLPSYTNYPQLIFIVEGEGALGISVPGCTETYEEAQQSQSSQDPRRRSSRSQSQEQEQQDSHQKIQYFREGDIIAIPPGIPYWTYNYGEQRLVAINLLDTTSLLNQLDPSPRRFYIAGNPEEEHPETQEQQGQQREQQQGAGGRRRGKHQQEQEEEGKNNVLSGFDPQFLTQAFNVDEEIINRLQNPDERLKQIVRVKRGLSIISPKSQEEEEEEEEEPRQRGQPERREERREEEKEEEEEEDEPRSRERYERQSRRRPGRQQGRQGEEQEEESESEQEGRGQQREWERTTRHRRAQGEEGEEEEEETSTRVRRQQGRGRGQEQGQEQGQEQEQEEEQQEGRRGRHGGRGRRSGQQREEEEEEQQQQQGRRKRQESRNGLEETICTARLLENIAKPSRADLYNPNAGRISSVNSLTLPILRWFQLSADYVNLYRNGIYAPHWNINANSVIFVTRGRGRVQVVNCQGNSVFNDDLRRGQLLVVPQNFVVAHQAGDEGFEFIAFKTNDLAATSPVKQVFRGIPAEVLANAFGLRLNQVSQLKYSGNQGPLVSPQSESEDHTLPKVA.

A signal peptide spans M1–A22. Intrachain disulfides connect C31-C64 and C107-C464. Residues L36–N261 enclose the Cupin type-1 1 domain. Disordered stretches follow at residues T110–Q142, P190–G243, and P285–G458. A compositionally biased stretch (low complexity) spans Q207–Q218. Composition is skewed to basic and acidic residues over residues H228–K237 and P298–E313. The segment covering E314–E323 has biased composition (acidic residues). 2 stretches are compositionally biased toward basic and acidic residues: residues P324–Q333 and Q357–T369. The span at R422–G433 shows a compositional bias: basic residues. In terms of domain architecture, Cupin type-1 2 spans E470–S616. A compositionally biased stretch (polar residues) spans N623–S632. Residues N623–A643 are disordered. The segment covering S634–A643 has biased composition (basic and acidic residues).

It belongs to the 11S seed storage protein (globulins) family. In terms of assembly, hexamer; each subunit is composed of an acidic and a basic chain derived from a single precursor and linked by a disulfide bond. Component of globulins complexes which accumulate in seeds.

Sulfur-rich seed storage protein. This protein found in the seeds of many leguminous and non-leguminous plants is the source of sulfur-containing amino acids in seed meals. This Lupinus angustifolius (Narrow-leaved blue lupine) protein is Conglutin alpha 2.